The sequence spans 162 residues: MARVEL domain-containing protein 1 (162 aa).

Topologically, residues 1–17 (MPTQPQEKRSFLQFLKS) are cytoplasmic. The MARVEL domain occupies 14-155 (FLKSFVGIVR…SGIYCSCRKC (142 aa)). The helical transmembrane segment at 18 to 38 (FVGIVRVLQILLGAGLWVTIA) threads the bilayer. At 39–47 (ANKYEGSIH) the chain is on the extracellular side. A helical membrane pass occupies residues 48–68 (FVLFVAVLFWLLTLAIFILTL). Residues 69–86 (LDKQDLVPIVGGERWLLS) lie on the Cytoplasmic side of the membrane. The helical transmembrane segment at 87-107 (NLIHDVVATLLYLSTIGIMIY) threads the bilayer. Residues 108-127 (KTQKNSYCNLDVYKHHCLYK) are Extracellular-facing. Residues 128 to 148 (VYLTASVFACLTAAVYLLSGI) form a helical membrane-spanning segment. Topologically, residues 149-162 (YCSCRKCRGERTVV) are cytoplasmic.

Its subcellular location is the membrane. It localises to the nucleus. The protein is MARVEL domain-containing protein 1 (marveld1) of Danio rerio (Zebrafish).